The following is a 353-amino-acid chain: D-alanine--D-alanine ligase A (353 aa).

Residues 141-346 enclose the ATP-grasp domain; that stretch reads KRLVNEAGLS…YPEIINRLVA (206 aa). 169 to 224 contacts ATP; it reads EQALGLPIFIKPARQGSSVGVHKVVTEADYQAAMSDGFTYDDKLLAEEFIQAREVE. 3 residues coordinate Mg(2+): D300, E313, and N315.

This sequence belongs to the D-alanine--D-alanine ligase family. It depends on Mg(2+) as a cofactor. Mn(2+) serves as cofactor.

It localises to the cytoplasm. The enzyme catalyses 2 D-alanine + ATP = D-alanyl-D-alanine + ADP + phosphate + H(+). Its pathway is cell wall biogenesis; peptidoglycan biosynthesis. In terms of biological role, cell wall formation. The chain is D-alanine--D-alanine ligase A from Brucella suis biovar 1 (strain 1330).